A 232-amino-acid chain; its full sequence is Response regulator MprA (232 aa).

In terms of domain architecture, Response regulatory spans 4 to 118 (RILVVDDDRA…ELLARMRALL (115 aa)). A 4-aspartylphosphate modification is found at Asp48. The segment at residues 131–229 (SVAMTFSDLS…VRGVGYVLRE (99 aa)) is a DNA-binding region (ompR/PhoB-type).

In terms of processing, phosphorylated and dephosphorylated by MprB.

It localises to the cytoplasm. Its function is as follows. Member of the two-component regulatory system MprB/MprA which contributes to maintaining a balance among several systems involved in stress resistance and is required for establishment and maintenance of persistent infection in the host. Functions as a transcriptional regulator that recognizes a 19-bp nucleotide motif comprizing two loosely conserved 8-bp direct DNA-binding motif repeats separated by a 3-bp spacer region. This chain is Response regulator MprA (mprA), found in Mycobacterium ulcerans (strain Agy99).